The primary structure comprises 369 residues: Probable dual-specificity RNA methyltransferase RlmN (369 aa).

The active-site Proton acceptor is Glu-108. The Radical SAM core domain maps to 114 to 351 (YPDRATLCIS…LAQGVSCTVR (238 aa)). Cys-121 and Cys-362 form a disulfide bridge. [4Fe-4S] cluster is bound by residues Cys-128, Cys-132, and Cys-135. S-adenosyl-L-methionine-binding positions include 183 to 184 (GE), Ser-217, 240 to 242 (SLH), and Asn-319. Catalysis depends on Cys-362, which acts as the S-methylcysteine intermediate.

Belongs to the radical SAM superfamily. RlmN family. The cofactor is [4Fe-4S] cluster.

Its subcellular location is the cytoplasm. The enzyme catalyses adenosine(2503) in 23S rRNA + 2 reduced [2Fe-2S]-[ferredoxin] + 2 S-adenosyl-L-methionine = 2-methyladenosine(2503) in 23S rRNA + 5'-deoxyadenosine + L-methionine + 2 oxidized [2Fe-2S]-[ferredoxin] + S-adenosyl-L-homocysteine. The catalysed reaction is adenosine(37) in tRNA + 2 reduced [2Fe-2S]-[ferredoxin] + 2 S-adenosyl-L-methionine = 2-methyladenosine(37) in tRNA + 5'-deoxyadenosine + L-methionine + 2 oxidized [2Fe-2S]-[ferredoxin] + S-adenosyl-L-homocysteine. Functionally, specifically methylates position 2 of adenine 2503 in 23S rRNA and position 2 of adenine 37 in tRNAs. This is Probable dual-specificity RNA methyltransferase RlmN from Rhodococcus opacus (strain B4).